Here is a 286-residue protein sequence, read N- to C-terminus: MSQKKKASLSKIHTGMNSSSKQVLSSTSSANEKTEDDVGDEMDFSLQCDACKKLIIGLNNLDRFDCGHFYCLVCSPLQPKENHSSCATSTSPSNAFTREVSPQQIAEHTGELSNNGAERGKIRGSTRATRKGSVNKSKSGRTRRHKKVPDQRLWYFLYLSKPVVVSLPTDATYHDLMARLYTLLGVSGKTHMITLRTQKSSSEEGEGEFSGRGDPAPLEVGDSKTRLSDLKITRHKMLLLDVDDQKKDGSGEEKKEKKSAEKEKKISHENVQSLSPSSRAEDPRSS.

4 disordered regions span residues 1–38 (MSQK…EDDV), 108–146 (HTGE…RRHK), 196–227 (RTQK…KTRL), and 241–286 (DVDD…PRSS). A compositionally biased stretch (low complexity) spans 18 to 29 (SSSKQVLSSTSS). Residues 243–268 (DDQKKDGSGEEKKEKKSAEKEKKISH) show a composition bias toward basic and acidic residues. Polar residues predominate over residues 269 to 278 (ENVQSLSPSS).

This is an uncharacterized protein from Caenorhabditis elegans.